We begin with the raw amino-acid sequence, 241 residues long: MSLLSAIDTSAASVYQPAQLLNWVYLSLQDTHQASAFDAFRPEPTAGAAPPELAFGKGRPEQLGSPLHSSYLNSFFQLQRGEALSNSVYKGASPYGSLNNIADGLSSLTEHFSDLTLTSEARKPSKRPPPNYLCHLCFNKGHYIKDCPQARPKGEGLTPYQGKKRCFGEYKCPKCKRKWMSGNSWANMGQECIKCHINVYPHKQRPLEKPDGLDVSDQSKEHPQHLCEKCKVLGYYCRRVQ.

2 positions are modified to phosphoserine: Ser-65 and Ser-93. A CCHC-type zinc finger spans residues 132-149; the sequence is YLCHLCFNKGHYIKDCPQ.

In Homo sapiens (Human), this protein is Zinc finger CCHC domain-containing protein 24 (ZCCHC24).